A 212-amino-acid polypeptide reads, in one-letter code: Ras-related protein Rab-2A (212 aa).

Ala2 is modified (N-acetylalanine). Positions 2–19 (AYAYLFKYIIIGDTGVGK) are required for interaction with PRKCI. 7 residues coordinate GTP: Gly16, Val17, Gly18, Lys19, Ser20, Cys21, and Thr38. Position 20 (Ser20) interacts with Mg(2+). A Switch 1 motif is present at residues 37 to 42 (LTIGVE). Thr38 and Asp61 together coordinate Mg(2+). Positions 63–72 (AGQESFRSIT) match the Switch 2 motif. GTP is bound by residues Gly64, Asn119, Lys120, Asp122, Ala150, and Lys151. Residues 190–212 (QHAATNASHGSNQGGQQAGGGCC) form a disordered region. Residues 201–212 (NQGGQQAGGGCC) are compositionally biased toward gly residues. 2 S-geranylgeranyl cysteine lipidation sites follow: Cys211 and Cys212.

This sequence belongs to the small GTPase superfamily. Rab family. In terms of assembly, interacts with PRKCI. Interacts with TRIP11. Interacts (in GTP-bound form) with GARIN1B. Interacts (GTP-bound) with HOPS complex component VPS39; interaction contributes to obtaining a functional HOPS complex that promotes autophagosome-lysosome membrane fusion driven by STX17-SNAP29-VAMP8. Interacts with VPS41. Mg(2+) is required as a cofactor. Prenylated. Prenylation is required for association with cellular membranes.

It localises to the endoplasmic reticulum-Golgi intermediate compartment membrane. Its subcellular location is the melanosome. The protein resides in the endoplasmic reticulum membrane. It is found in the golgi apparatus membrane. The protein localises to the cytoplasmic vesicle. It localises to the secretory vesicle. Its subcellular location is the acrosome. The protein resides in the autophagosome membrane. It catalyses the reaction GTP + H2O = GDP + phosphate + H(+). Its activity is regulated as follows. Regulated by guanine nucleotide exchange factors (GEFs) which promote the exchange of bound GDP for free GTP, GTPase activating proteins (GAPs) which increase the GTP hydrolysis activity, and GDP dissociation inhibitors (GDIs) which inhibit the dissociation of the nucleotide from the GTPase. Functionally, the small GTPases Rab are key regulators of intracellular membrane trafficking, from the formation of transport vesicles to their fusion with membranes. Rabs cycle between active GTP-bound and inactive GDP-bound states. In their active state, drive transport of vesicular carriers from donor organelles to acceptor organelles to regulate the membrane traffic that maintains organelle identity and morphology. RAB2A regulates autophagy by promoting autophagosome-lysosome fusion via recruitment of the HOPS endosomal tethering complex; this process involves autophagosomal RAB2A and lysosomal RAB39A recruitment of HOPS subcomplexes VPS39-VPS11 and VPS41-VPS16-VPS18-VPS33A, respectively, which assemble into a functional complex to mediate membrane tethering and SNAREs-driven membrane fusion. Required for protein transport from the endoplasmic reticulum to the Golgi complex. Regulates the compacted morphology of the Golgi. Together with RAB2B, redundantly required for efficient autophagic flux. In Mus musculus (Mouse), this protein is Ras-related protein Rab-2A.